We begin with the raw amino-acid sequence, 396 residues long: Putative pyridoxal phosphate-dependent acyltransferase (396 aa).

111–112 is a binding site for pyridoxal 5'-phosphate; sequence GF. Substrate is bound at residue histidine 136. Pyridoxal 5'-phosphate contacts are provided by residues serine 186, 211-214, and 241-244; these read DDAH and TLSK. Lysine 244 carries the post-translational modification N6-(pyridoxal phosphate)lysine. Substrate is bound at residue threonine 358.

Belongs to the class-II pyridoxal-phosphate-dependent aminotransferase family. As to quaternary structure, homodimer. The cofactor is pyridoxal 5'-phosphate.

This chain is Putative pyridoxal phosphate-dependent acyltransferase, found in Bacillus anthracis.